Here is a 303-residue protein sequence, read N- to C-terminus: Aspartate carbamoyltransferase catalytic subunit (303 aa).

2 residues coordinate carbamoyl phosphate: arginine 51 and threonine 52. Lysine 80 is an L-aspartate binding site. Carbamoyl phosphate-binding residues include arginine 101, histidine 129, and glutamine 132. L-aspartate is bound by residues arginine 162 and arginine 221. Positions 260 and 261 each coordinate carbamoyl phosphate.

The protein belongs to the aspartate/ornithine carbamoyltransferase superfamily. ATCase family. Heterooligomer of catalytic and regulatory chains.

The enzyme catalyses carbamoyl phosphate + L-aspartate = N-carbamoyl-L-aspartate + phosphate + H(+). It participates in pyrimidine metabolism; UMP biosynthesis via de novo pathway; (S)-dihydroorotate from bicarbonate: step 2/3. Catalyzes the condensation of carbamoyl phosphate and aspartate to form carbamoyl aspartate and inorganic phosphate, the committed step in the de novo pyrimidine nucleotide biosynthesis pathway. The protein is Aspartate carbamoyltransferase catalytic subunit of Saccharolobus solfataricus (strain ATCC 35092 / DSM 1617 / JCM 11322 / P2) (Sulfolobus solfataricus).